The chain runs to 285 residues: Probable endonuclease 4 (285 aa).

Zn(2+) contacts are provided by H69, H109, E145, D179, H182, H216, D229, H231, and E261.

This sequence belongs to the AP endonuclease 2 family. The cofactor is Zn(2+).

It carries out the reaction Endonucleolytic cleavage to 5'-phosphooligonucleotide end-products.. Functionally, endonuclease IV plays a role in DNA repair. It cleaves phosphodiester bonds at apurinic or apyrimidinic (AP) sites, generating a 3'-hydroxyl group and a 5'-terminal sugar phosphate. The protein is Probable endonuclease 4 of Yersinia pestis bv. Antiqua (strain Antiqua).